A 574-amino-acid polypeptide reads, in one-letter code: uncharacterized protein (574 aa).

11 helical membrane-spanning segments follow: residues 14–34 (FFPTLWLILAPLILSPLLFFG), 54–74 (VVPLAVTSFIPMIALPFLGIV), 124–144 (WLMAGFMIITSFISLWISDTA), 205–225 (ICKCMMLLVAHASLIGGTGTI), 253–273 (SWMAFAIPPMIFYMFSSWFIV), 323–343 (LVIFVLAVLSWVSSDPKVIPG), 350–370 (KGYVTDSCSGLVAVFLLFIWP), 403–423 (FPWSIILLLGAGFAISDAVRV), 441–461 (MPFFVMQIILSIVVVVMTEFS), 485–505 (PLYFSIPTAIGPSFSFMLPMA), and 520–540 (MIDMVSCGVFLNIFCIAITAI). 2 N-linked (GlcNAc...) asparagine glycosylation sites follow: Asn-565 and Asn-569.

This sequence belongs to the SLC13A/DASS transporter (TC 2.A.47) family. NADC subfamily.

It localises to the membrane. This is an uncharacterized protein from Caenorhabditis elegans.